The chain runs to 356 residues: MSRANPPSNSSGSRKISFNVSEQYDIQDVVGEGAYGVVCSAIHKPSGQKVAIKKITPFDHSMFCLRTLREMKLLRYFNHENIISILDIQKPRSYETFNEVYLIQELMETDMHRVIRTQDLSDDHCQYFIYQTLRALKAMHSANVLHRDLKPSNLLLNANCDLKVCDFGLARSAASQEDNSGFMTEYVATRWYRAPEIMLTFKEYTKAIDVWSVGCILAEMLSGKPLFPGKDYHHQLTLILDVLGTPTMEDYYGIKSRRAREYIRSLPFKKKVPFRTLFPKTSDLALDLLEKLLAFNPVKRITVEEALKHPYLEPYHDPDDEPTAPPIPEEFFDFDKHKDNLSKEQLKQFIYQEIMR.

The Protein kinase domain maps to 24–312 (YDIQDVVGEG…VEEALKHPYL (289 aa)). ATP contacts are provided by residues 30–38 (VGEGAYGVV) and Lys-53.

The protein belongs to the protein kinase superfamily. CMGC Ser/Thr protein kinase family. MAP kinase subfamily. Requires Mg(2+) as cofactor. Post-translationally, phosphorylated by MST7.

The catalysed reaction is L-seryl-[protein] + ATP = O-phospho-L-seryl-[protein] + ADP + H(+). It catalyses the reaction L-threonyl-[protein] + ATP = O-phospho-L-threonyl-[protein] + ADP + H(+). Its function is as follows. Mitogen-activated protein kinase; part of the MST11-MST7-PMK1 MAP kinase (MAPK) cascade that is essential for appressorium formation, penetration and invasive growth. Central regulator of appressorium development that acts downstream of the cAMP signal. The MST11-MST7-PMK1 MAP kinase cascade transduces signals from the cell surface sensors MDB2 and SHO1 that recognize various surface signals such as surface hydrophobicity, cutin monomers, and rice leaf waxes. Regulates expression of secreted fungal effector proteins implicated of host immune defenses, preventing reactive oxygen species generation and excessive callose deposition at plasmodesmata. Furthermore, controls the hyphal constriction required for fungal growth from one rice cell to the neighboring cell, enabling host tissue colonization and blast disease. Targets downstream of the PMK1-MAPK pathway include transcription factor MST12 and pathogenicity-related genes GAS1 and GAS2, both of which are expressed during appressorium formation, even if regulation of MST12 is not associated with expression of GAS1 or GAS2. In Pyricularia oryzae (strain 70-15 / ATCC MYA-4617 / FGSC 8958) (Rice blast fungus), this protein is Mitogen-activated protein kinase PMK11.